The chain runs to 867 residues: Ataxin-7 (867 aa).

Over residues 1 to 15 (MSERAADDVRGEPRR) the composition is skewed to basic and acidic residues. The disordered stretch occupies residues 1–59 (MSERAADDVRGEPRRAAGGAAAARQQQQQPQPLQPQRQHPPLRRPRAEDGGTGDTTTSA). The span at 16–39 (AAGGAAAARQQQQQPQPLQPQRQH) shows a compositional bias: low complexity. Lys222 is subject to N6-acetyllysine. A Glycyl lysine isopeptide (Lys-Gly) (interchain with G-Cter in SUMO); alternate cross-link involves residue Lys243. Residue Lys243 forms a Glycyl lysine isopeptide (Lys-Gly) (interchain with G-Cter in SUMO2); alternate linkage. The region spanning 320 to 387 (KRLSEREFDP…KAREKELIRH (68 aa)) is the SCA7 domain. Positions 379–400 (AREKELIRHDSQQVPHPLRDPH) are enriched in basic and acidic residues. Disordered regions lie at residues 379–483 (AREK…EESV), 600–711 (HGTT…SHSV), and 845–867 (TGNI…KARP). Pro residues-rich tracts occupy residues 426–437 (PQTPSLPRPPGC) and 447–462 (IDPP…PLPA). Residues 472 to 481 (EEGEGDDREE) show a composition bias toward acidic residues. Positions 619–647 (SVQSRQVSASSSPPSTPSGLSSVPSSPLS) are enriched in low complexity. Basic residues predominate over residues 649-659 (KPQKWKPSKSI). Positions 665–674 (SALSTNCHNA) are enriched in polar residues. A compositionally biased stretch (low complexity) spans 689–711 (SSPLLVPSSSSSSSSSSSSSHSV). Residues 846-860 (GNISGAQGLTNNSLL) are compositionally biased toward polar residues.

It belongs to the ataxin-7 family. Component of the SAGA transcription coactivator-HAT complex, at least composed of SUPT3H, GCN5L2, TAF5L, TAF6L, SUPT7L, TADA3L, TAD1L, TAF10, TAF12, TRRAP, TAF9 and ATXN7. The STAGA core complex is associated with a subcomplex required for histone deubiquitination composed of ATXN7L3, ENY2 and USP22. Interacts with SORBS1, PSMC1 and CRX. Interacts with TRRAP, GCN5L2 and TAF10. Interacts with alpha tubulin. Proteolytically cleaved by caspase-7 (CASP7). Post-translationally, sumoylation has no effect on subcellular location or interaction with components of the STAGA complex. In terms of tissue distribution, widely expressed in adult tissues, with the highest expression in heart, brain, liver and kidney.

The protein localises to the nucleus. It is found in the nucleolus. It localises to the nucleus matrix. The protein resides in the cytoplasm. Its subcellular location is the cytoskeleton. Its function is as follows. Acts as a component of the SAGA (aka STAGA) transcription coactivator-HAT complex. Mediates the interaction of SAGA complex with the CRX and is involved in CRX-dependent gene activation. Probably involved in tethering the deubiquitination module within the SAGA complex. Necessary for microtubule cytoskeleton stabilization. Involved in neurodegeneration. This is Ataxin-7 (Atxn7) from Mus musculus (Mouse).